A 676-amino-acid chain; its full sequence is Protein TAPT1 homolog (676 aa).

The tract at residues 1 to 44 is disordered; that stretch reads MNATLNSAGGKRQLRFRGDVTGSRVEELHHQQQEEQKQKAPLAQ. The segment covering 24 to 38 has biased composition (basic and acidic residues); that stretch reads RVEELHHQQQEEQKQ. Transmembrane regions (helical) follow at residues 128–148, 170–190, 249–269, 346–366, 414–434, and 437–457; these read SFLYIHTFLPVRFVMAVWALV, EICDLLKGVIWMTVTLIMLLV, VLTHVLFTLIYVFLHSGLIMF, FCVMLPDCFAVLFTEILIDWV, GFIPFPLAVVLIKAIYTAVSF, and LAAWLLFLLAYLFAMGLRICL. The disordered stretch occupies residues 625 to 676; that stretch reads SGDGVTSAKAKKATQRLPKRTHKRSESEPGMPSMVEKGGAAGIAGGNQTTQL. Positions 633–647 are enriched in basic residues; it reads KAKKATQRLPKRTHK.

It belongs to the TAPT1 family.

It localises to the membrane. This Drosophila melanogaster (Fruit fly) protein is Protein TAPT1 homolog.